We begin with the raw amino-acid sequence, 89 residues long: Putative defensin-like protein 230 (89 aa).

A signal peptide spans 1–26 (MRSVIWFIVSYTLMLLVLRGGKEVEA). Intrachain disulfides connect Cys30–Cys84, Cys40–Cys65, Cys48–Cys78, and Cys63–Cys80.

This sequence belongs to the DEFL family.

Its subcellular location is the secreted. The chain is Putative defensin-like protein 230 (SCRL24) from Arabidopsis thaliana (Mouse-ear cress).